Here is a 274-residue protein sequence, read N- to C-terminus: 4-hydroxy-3-methylbut-2-enyl diphosphate reductase (274 aa).

C12 contributes to the [4Fe-4S] cluster binding site. Residues H36 and H70 each contribute to the (2E)-4-hydroxy-3-methylbut-2-enyl diphosphate site. Positions 36 and 70 each coordinate dimethylallyl diphosphate. Residues H36 and H70 each coordinate isopentenyl diphosphate. C92 provides a ligand contact to [4Fe-4S] cluster. H120 provides a ligand contact to (2E)-4-hydroxy-3-methylbut-2-enyl diphosphate. H120 contributes to the dimethylallyl diphosphate binding site. H120 is an isopentenyl diphosphate binding site. Residue E122 is the Proton donor of the active site. A (2E)-4-hydroxy-3-methylbut-2-enyl diphosphate-binding site is contributed by T158. C186 serves as a coordination point for [4Fe-4S] cluster. (2E)-4-hydroxy-3-methylbut-2-enyl diphosphate contacts are provided by S214, S215, N216, and S258. Dimethylallyl diphosphate contacts are provided by S214, S215, N216, and S258. Positions 214, 215, 216, and 258 each coordinate isopentenyl diphosphate.

This sequence belongs to the IspH family. The cofactor is [4Fe-4S] cluster.

It carries out the reaction isopentenyl diphosphate + 2 oxidized [2Fe-2S]-[ferredoxin] + H2O = (2E)-4-hydroxy-3-methylbut-2-enyl diphosphate + 2 reduced [2Fe-2S]-[ferredoxin] + 2 H(+). The enzyme catalyses dimethylallyl diphosphate + 2 oxidized [2Fe-2S]-[ferredoxin] + H2O = (2E)-4-hydroxy-3-methylbut-2-enyl diphosphate + 2 reduced [2Fe-2S]-[ferredoxin] + 2 H(+). It functions in the pathway isoprenoid biosynthesis; dimethylallyl diphosphate biosynthesis; dimethylallyl diphosphate from (2E)-4-hydroxy-3-methylbutenyl diphosphate: step 1/1. The protein operates within isoprenoid biosynthesis; isopentenyl diphosphate biosynthesis via DXP pathway; isopentenyl diphosphate from 1-deoxy-D-xylulose 5-phosphate: step 6/6. In terms of biological role, catalyzes the conversion of 1-hydroxy-2-methyl-2-(E)-butenyl 4-diphosphate (HMBPP) into a mixture of isopentenyl diphosphate (IPP) and dimethylallyl diphosphate (DMAPP). Acts in the terminal step of the DOXP/MEP pathway for isoprenoid precursor biosynthesis. The sequence is that of 4-hydroxy-3-methylbut-2-enyl diphosphate reductase from Campylobacter curvus (strain 525.92).